Reading from the N-terminus, the 111-residue chain is Rubredoxin (111 aa).

Residues 11–62 form the Rubredoxin-like domain; that stretch reads LDRFECRSCGYVYEPEKGDNKHDIAPETPFAELPINWRCPVCTAKKAAFTNI. Residues Cys-16, Cys-19, Cys-49, and Cys-52 each contribute to the Fe cation site.

Belongs to the rubredoxin family. It depends on Fe(3+) as a cofactor.

In terms of biological role, rubredoxin is a small nonheme, iron protein lacking acid-labile sulfide. Its single Fe, chelated to 4 Cys, functions as an electron acceptor and may also stabilize the conformation of the molecule. Could be involved in hydrogenase-linked redox processes. In Nostoc sp. (strain PCC 7120 / SAG 25.82 / UTEX 2576), this protein is Rubredoxin (rub).